The chain runs to 273 residues: Anthocyanin regulatory C1 protein (273 aa).

2 HTH myb-type domains span residues 9–65 (KEGV…RPNI) and 66–116 (RRGN…GRRA). 2 consecutive DNA-binding regions (H-T-H motif) follow at residues 37–61 (WREV…LNYL) and 89–112 (WSLI…NSTL). 2 disordered regions span residues 137–164 (ATPA…SAGT) and 196–220 (AGET…SDDC). Gly residues predominate over residues 204–214 (AGGGGGGGGEA).

The protein localises to the nucleus. Functionally, controls the expression of genes involved in anthocyanin biosynthesis. Regulates the expression of at least 3 structural genes: chalcone synthase, dihydroflavonol reductase and flavonol O(3) glucosyltransferase. C1 acts as a trans-acting factor. The chain is Anthocyanin regulatory C1 protein (C1) from Zea mays (Maize).